The following is a 214-amino-acid chain: NADH-quinone oxidoreductase subunit C (214 aa).

Belongs to the complex I 30 kDa subunit family. NDH-1 is composed of 14 different subunits. Subunits NuoB, C, D, E, F, and G constitute the peripheral sector of the complex.

The protein resides in the cell inner membrane. The catalysed reaction is a quinone + NADH + 5 H(+)(in) = a quinol + NAD(+) + 4 H(+)(out). Functionally, NDH-1 shuttles electrons from NADH, via FMN and iron-sulfur (Fe-S) centers, to quinones in the respiratory chain. The immediate electron acceptor for the enzyme in this species is believed to be ubiquinone. Couples the redox reaction to proton translocation (for every two electrons transferred, four hydrogen ions are translocated across the cytoplasmic membrane), and thus conserves the redox energy in a proton gradient. The protein is NADH-quinone oxidoreductase subunit C of Francisella tularensis subsp. novicida (strain U112).